The chain runs to 201 residues: Large ribosomal subunit protein uL4 (201 aa).

The interval 45 to 75 is disordered; sequence AQKSRSEVSGSGKKPWRQKGTGRARSGSLRS.

Belongs to the universal ribosomal protein uL4 family. In terms of assembly, part of the 50S ribosomal subunit.

In terms of biological role, one of the primary rRNA binding proteins, this protein initially binds near the 5'-end of the 23S rRNA. It is important during the early stages of 50S assembly. It makes multiple contacts with different domains of the 23S rRNA in the assembled 50S subunit and ribosome. Its function is as follows. Forms part of the polypeptide exit tunnel. The sequence is that of Large ribosomal subunit protein uL4 from Buchnera aphidicola subsp. Cinara cedri (strain Cc).